The chain runs to 813 residues: Acyl-homoserine lactone acylase QuiP (813 aa).

The signal sequence occupies residues 1 to 26 (MAAPAFPPFRLRFATAATLLGMLGLA). Residue S262 is the Nucleophile of the active site.

This sequence belongs to the peptidase S45 family. In terms of assembly, heterodimer of an alpha subunit and a beta subunit processed from the same precursor.

The protein localises to the periplasm. It catalyses the reaction an N-acyl-L-homoserine lactone + H2O = L-homoserine lactone + a carboxylate. Its function is as follows. Catalyzes the deacylation of acyl-homoserine lactone (AHL or acyl-HSL), releasing homoserine lactone (HSL) and the corresponding fatty acid. Possesses a specificity for the degradation of long-chain acyl-HSLs (side chains of seven or more carbons in length). The polypeptide is Acyl-homoserine lactone acylase QuiP (quiP) (Pseudomonas putida (strain ATCC 47054 / DSM 6125 / CFBP 8728 / NCIMB 11950 / KT2440)).